We begin with the raw amino-acid sequence, 333 residues long: Protoheme IX farnesyltransferase (333 aa).

8 helical membrane-spanning segments follow: residues 31–51 (VMSL…APIH), 52–72 (PVLA…SGAL), 115–135 (MFLG…TIVF), 152–172 (IVIG…AATG), 178–198 (AWLM…ALSL), 223–243 (KQIL…VLTG), 244–264 (LGGP…LLLA), and 303–323 (LFAF…GEAV).

This sequence belongs to the UbiA prenyltransferase family. Protoheme IX farnesyltransferase subfamily.

The protein resides in the cell inner membrane. It carries out the reaction heme b + (2E,6E)-farnesyl diphosphate + H2O = Fe(II)-heme o + diphosphate. It participates in porphyrin-containing compound metabolism; heme O biosynthesis; heme O from protoheme: step 1/1. Functionally, converts heme B (protoheme IX) to heme O by substitution of the vinyl group on carbon 2 of heme B porphyrin ring with a hydroxyethyl farnesyl side group. The polypeptide is Protoheme IX farnesyltransferase (Caulobacter vibrioides (strain ATCC 19089 / CIP 103742 / CB 15) (Caulobacter crescentus)).